Here is a 322-residue protein sequence, read N- to C-terminus: Ribosomal RNA large subunit methyltransferase F (322 aa).

This sequence belongs to the methyltransferase superfamily. METTL16/RlmF family.

The protein localises to the cytoplasm. The catalysed reaction is adenosine(1618) in 23S rRNA + S-adenosyl-L-methionine = N(6)-methyladenosine(1618) in 23S rRNA + S-adenosyl-L-homocysteine + H(+). In terms of biological role, specifically methylates the adenine in position 1618 of 23S rRNA. In Cytophaga hutchinsonii (strain ATCC 33406 / DSM 1761 / CIP 103989 / NBRC 15051 / NCIMB 9469 / D465), this protein is Ribosomal RNA large subunit methyltransferase F.